The following is a 77-amino-acid chain: Sec-independent protein translocase protein TatA (77 aa).

A helical membrane pass occupies residues 1–21 (MGGLSIWHWLIVLLIVALVFG). Positions 40–77 (KDGMREGEAPADPQQLPRSGSVNVDAKDATRSSDSNKA) are disordered. Over residues 64-77 (DAKDATRSSDSNKA) the composition is skewed to basic and acidic residues.

The protein belongs to the TatA/E family. As to quaternary structure, the Tat system comprises two distinct complexes: a TatABC complex, containing multiple copies of TatA, TatB and TatC subunits, and a separate TatA complex, containing only TatA subunits. Substrates initially bind to the TatABC complex, which probably triggers association of the separate TatA complex to form the active translocon.

The protein resides in the cell inner membrane. Functionally, part of the twin-arginine translocation (Tat) system that transports large folded proteins containing a characteristic twin-arginine motif in their signal peptide across membranes. TatA could form the protein-conducting channel of the Tat system. The chain is Sec-independent protein translocase protein TatA from Burkholderia thailandensis (strain ATCC 700388 / DSM 13276 / CCUG 48851 / CIP 106301 / E264).